Here is a 478-residue protein sequence, read N- to C-terminus: Cysteine--tRNA ligase (478 aa).

Cysteine 37 contacts Zn(2+). The 'HIGH' region motif lies at 39 to 49 (PTVYHYAHIGN). The Zn(2+) site is built by cysteine 224, histidine 249, and glutamate 253. The 'KMSKS' region signature appears at 281–285 (KMSKS). Lysine 284 is a binding site for ATP.

It belongs to the class-I aminoacyl-tRNA synthetase family. As to quaternary structure, monomer. Zn(2+) serves as cofactor.

It is found in the cytoplasm. It catalyses the reaction tRNA(Cys) + L-cysteine + ATP = L-cysteinyl-tRNA(Cys) + AMP + diphosphate. The chain is Cysteine--tRNA ligase from Protochlamydia amoebophila (strain UWE25).